Here is a 134-residue protein sequence, read N- to C-terminus: Cell division protein SepF 1 (134 aa).

The protein belongs to the SepF family. Homodimer. Interacts with FtsZ.

It localises to the cytoplasm. Cell division protein that is part of the divisome complex and is recruited early to the Z-ring. Probably stimulates Z-ring formation, perhaps through the cross-linking of FtsZ protofilaments. Its function overlaps with FtsA. The sequence is that of Cell division protein SepF 1 from Streptomyces avermitilis (strain ATCC 31267 / DSM 46492 / JCM 5070 / NBRC 14893 / NCIMB 12804 / NRRL 8165 / MA-4680).